Reading from the N-terminus, the 201-residue chain is Protein ripply1 (201 aa).

The segment at 1–29 (MDPAASPAAAPPAAPAAAPAADPAADPAA) is disordered. Residues 15 to 29 (PAAAPAADPAADPAA) show a composition bias toward low complexity. The WRPW motif signature appears at 57-60 (AYLW). Positions 99-134 (HPVRLYWPKSHSFDYLYSAGEILLNNFPVQATINLY) are ripply homology domain. Positions 136-174 (DSDSADNEEDKEEEEEEEEEEDDEEEEEDEDKDVNENEP) are enriched in acidic residues. The segment at 136–201 (DSDSADNEED…SPDPHSACPN (66 aa)) is disordered.

It belongs to the ripply family. Expressed in the anterior presomitic mesoderm and somites of stage E9.5 dpc embryos. Also expressed in tongue, diaphragm and intercostal muscles at 16.5 dpc.

Its subcellular location is the nucleus. Its function is as follows. Plays a role in somitogenesis. Essential for transcriptional repression of the segmental patterning genes, thus terminating the segmentation program in the presomitic mesoderm, and also required for the maintenance of rostrocaudal polarity in somites. This is Protein ripply1 from Mus musculus (Mouse).